We begin with the raw amino-acid sequence, 253 residues long: Ice-binding protein (253 aa).

The N-terminal stretch at methionine 1 to alanine 27 is a signal peptide. An intrachain disulfide couples cysteine 75 to cysteine 93. Short sequence motifs (ice-binding site motif (T-A/G-X-T/N)) lie at residues threonine 220–threonine 223 and threonine 232–threonine 235.

Belongs to the ice-binding protein family.

The protein resides in the secreted. Functionally, binds to the surface of ice crystals and inhibits their growth. Has ice recrystallization inhibition (RI) activity (the ability to prevent the formation of larger grains of ice at the expense of smaller grains), which may protect membranes from freezing injury. Has high thermal hysteresis (TH) activity, which is the ability to lower the freezing point of an aqueous solution below its melting point, and thus the freezing of the cell fluid can be prevented protecting the organism from ice damage. The TH activity of this protein is 3.8 degrees Celsius at 14 mM. In Colwellia sp, this protein is Ice-binding protein.